Reading from the N-terminus, the 803-residue chain is DNA polymerase 2 (803 aa).

Belongs to the DNA polymerase type-B family.

It catalyses the reaction DNA(n) + a 2'-deoxyribonucleoside 5'-triphosphate = DNA(n+1) + diphosphate. This Aeropyrum pernix (strain ATCC 700893 / DSM 11879 / JCM 9820 / NBRC 100138 / K1) protein is DNA polymerase 2 (polB).